A 44-amino-acid chain; its full sequence is Capsid protein G8P (44 aa).

An N-acetylserine; by host modification is found at Ser-1. Residues 1–19 (SGVGDGVDVVSAIEGAAGP) lie on the Periplasmic side of the membrane. Residues 20 to 37 (IAAIGGAVLTVMVGIKVY) form a helical membrane-spanning segment. Residues 38–44 (KWVRRAM) lie on the Cytoplasmic side of the membrane.

This sequence belongs to the inovirus capsid protein family. In terms of assembly, homomultimerizes. There are several thousands of this protein in the phage capsid.

It is found in the virion. It localises to the host membrane. In terms of biological role, self assembles to form a helical capsid wrapping up the viral genomic DNA. The capsid displays a filamentous structure with a length of 760-1950 nm and a width of 6-8 nm. The virion assembly and budding take place at the host inner membrane. The chain is Capsid protein G8P (VIII) from Xanthomonas campestris pv. oryzae (Bacteriophage Xf).